Consider the following 353-residue polypeptide: Variable large protein 17 (353 aa).

Positions 1-18 (MRKRISAIIMTLFMVLVS) are cleaved as a signal peptide. Cys-19 is lipidated: N-palmitoyl cysteine. A lipid anchor (S-diacylglycerol cysteine) is attached at Cys-19. The interval 332–353 (EDKSVEATNTAEATTSGQQAKN) is disordered. Positions 337 to 353 (EATNTAEATTSGQQAKN) are enriched in polar residues.

Belongs to the variable large protein (Vlp) family. Delta subfamily.

The protein localises to the cell outer membrane. Functionally, the Vlp and Vsp proteins are antigenically distinct proteins, only one vlp or vsp gene is transcriptionally active at any one time. Switching between these genes is a mechanism of host immune response evasion. The protein is Variable large protein 17 of Borrelia hermsii.